A 3146-amino-acid chain; its full sequence is Bassianolide nonribosomal cyclodepsipeptide synthetase (3146 aa).

Residues 1 to 12 (MEPPNNANTGQL) show a composition bias toward polar residues. Positions 1–23 (MEPPNNANTGQLGPTLPNGTVDL) are disordered. The condensation 1 stretch occupies residues 69–454 (HVVYEIPEDV…INKLQSTDGS (386 aa)). Positions 495–887 (GDTPNKPAVC…GRMDSQVKIR (393 aa)) are adenylation 1. The region spanning 1015–1091 (PDASAGVTKL…SLQAAIGGSS (77 aa)) is the Carrier 1 domain. S1052 carries the post-translational modification O-(pantetheine 4'-phosphoryl)serine. The segment at 1109–1538 (SYSQGRLWFL…QTLISVVPLT (430 aa)) is condensation 2. Positions 1567-1973 (FRTQVASYPD…GRMDFQFKIR (407 aa)) are adenylation 2. Residues 2041–2181 (TYTELDTVSS…FPTRDYLERV (141 aa)) form an S-adenosyl-L-methionine-dependent N-methyltransferase (MT) region. Carrier domains follow at residues 2514 to 2588 (FPLS…RQQL) and 2614 to 2688 (APTT…EVSQ). O-(pantetheine 4'-phosphoryl)serine occurs at positions 2548 and 2648. The interval 2734 to 3138 (QDVYLATHLQ…THLMEQVCNT (405 aa)) is condensation 3.

Belongs to the NRP synthetase family.

It carries out the reaction 4 (R)-2-hydroxy-3-methylbutanoate + 4 L-leucine + 4 S-adenosyl-L-methionine + 8 ATP = bassianolide + 8 AMP + 4 S-adenosyl-L-homocysteine + 8 diphosphate + 8 H(+). In terms of biological role, bassianolide nonribosomal synthetase that mediates the biosynthesis of bassianolide (BSL), a non-ribosomal cyclodepsipeptide that shows insecticidal and cancer cell antiproliferative activity. BSLS first catalyzes the iterative synthesis of an enzyme-bound dipeptidol monomer intermediate from D-2-hydroxyisovalerate and L-leucine before performing the condensation and cyclization of 4 dipeptidol monomers to yield the cyclic tetrameric ester bassianolide. The N-methyltransferase MT domain is responsible for the methylation of the leucine residues of bassianolide. BSLS is flexible with both the amino acid and hydroxyl acid precursors, and produces bassianolide as the major product (containing N-methyl-L-Leu), together with small amounts of beauvericin and its analogs beauvericins A-C (containing N-methyl-L-Phe). In Beauveria bassiana (White muscardine disease fungus), this protein is Bassianolide nonribosomal cyclodepsipeptide synthetase.